Reading from the N-terminus, the 305-residue chain is Ornithine carbamoyltransferase (305 aa).

Carbamoyl phosphate-binding positions include 48–51 (STRT), Arg99, and 126–129 (HPCQ). L-ornithine-binding positions include Asn157, Asp222, and 226-227 (SM). Carbamoyl phosphate-binding positions include 262–263 (CL) and Arg290.

This sequence belongs to the aspartate/ornithine carbamoyltransferase superfamily. OTCase family.

It is found in the cytoplasm. The catalysed reaction is carbamoyl phosphate + L-ornithine = L-citrulline + phosphate + H(+). It participates in amino-acid biosynthesis; L-arginine biosynthesis; L-arginine from L-ornithine and carbamoyl phosphate: step 1/3. Its function is as follows. Reversibly catalyzes the transfer of the carbamoyl group from carbamoyl phosphate (CP) to the N(epsilon) atom of ornithine (ORN) to produce L-citrulline. The protein is Ornithine carbamoyltransferase (argF) of Methanocaldococcus jannaschii (strain ATCC 43067 / DSM 2661 / JAL-1 / JCM 10045 / NBRC 100440) (Methanococcus jannaschii).